Reading from the N-terminus, the 283-residue chain is MAARQVSLGSITFANDAPFVLIGGVNVLESQQFALDAAAVYADVCRRLSIPLVFKASFDKANRSSIHSFRGPGLSDGLAMLQAVKDTHGIPVITDVHTPEQAAPAAEVCDIIQLPAFLARQTDLVQAMAGTGAVINIKKPQFLSPSQMANVVEKFRECGNEQLLICERGSNFGYDNLVVDMLGFGVMKRCCDDLPLIFDVTHALQCRDPGGAASGGRRSQVLDLARAGMAVGLAGLFLEAHPDPSQARCDGPSALPLHQLEPFLSQLKAVDDLVKSLPALTIQ.

It belongs to the KdsA family.

It localises to the cytoplasm. It carries out the reaction D-arabinose 5-phosphate + phosphoenolpyruvate + H2O = 3-deoxy-alpha-D-manno-2-octulosonate-8-phosphate + phosphate. It functions in the pathway carbohydrate biosynthesis; 3-deoxy-D-manno-octulosonate biosynthesis; 3-deoxy-D-manno-octulosonate from D-ribulose 5-phosphate: step 2/3. It participates in bacterial outer membrane biogenesis; lipopolysaccharide biosynthesis. The chain is 2-dehydro-3-deoxyphosphooctonate aldolase from Synechococcus sp. (strain WH7803).